Here is a 556-residue protein sequence, read N- to C-terminus: 2-succinyl-5-enolpyruvyl-6-hydroxy-3-cyclohexene-1-carboxylate synthase (556 aa).

The protein belongs to the TPP enzyme family. MenD subfamily. As to quaternary structure, homodimer. The cofactor is Mg(2+). Mn(2+) serves as cofactor. It depends on thiamine diphosphate as a cofactor.

The catalysed reaction is isochorismate + 2-oxoglutarate + H(+) = 5-enolpyruvoyl-6-hydroxy-2-succinyl-cyclohex-3-ene-1-carboxylate + CO2. It participates in quinol/quinone metabolism; 1,4-dihydroxy-2-naphthoate biosynthesis; 1,4-dihydroxy-2-naphthoate from chorismate: step 2/7. The protein operates within quinol/quinone metabolism; menaquinone biosynthesis. In terms of biological role, catalyzes the thiamine diphosphate-dependent decarboxylation of 2-oxoglutarate and the subsequent addition of the resulting succinic semialdehyde-thiamine pyrophosphate anion to isochorismate to yield 2-succinyl-5-enolpyruvyl-6-hydroxy-3-cyclohexene-1-carboxylate (SEPHCHC). This chain is 2-succinyl-5-enolpyruvyl-6-hydroxy-3-cyclohexene-1-carboxylate synthase, found in Salmonella arizonae (strain ATCC BAA-731 / CDC346-86 / RSK2980).